Consider the following 429-residue polypeptide: SET domain-containing protein 14 (429 aa).

Zn(2+) contacts are provided by Cys26, Cys29, Cys39, Cys42, Cys48, Cys52, His60, and Cys64. The MYND-type zinc-finger motif lies at 26 to 64 (CNQCLTSMAELKKCSACRRLAYCSQECQRADWKLHKVEC).

It localises to the nucleus. The polypeptide is SET domain-containing protein 14 (set-14) (Caenorhabditis elegans).